A 92-amino-acid polypeptide reads, in one-letter code: Neuropeptide F (92 aa).

An N-terminal signal peptide occupies residues 1-27 (MSQSRPLALLVVAALVAAAVLVAAAEA). Positions 28–51 (QQADGNKLEGLADALKYLQELDRY) are excised as a propeptide. Phe-60 bears the Phenylalanine amide mark. Residues 64–92 (AELRPDVVDDVIPEEMSADKFWRRFARRR) constitute a propeptide that is removed on maturation.

This sequence belongs to the NPY family. As to expression, widely expressed in the nervous system. Expressed in corpora cardiaca, hypocerebral ganglion, frontal ganglion, protocerebrum, antennal lobe, tritocerebrum and thoracic ganglia. Not detected in corpora allata, pars intercerebralis, circumesophageal connectives, subesophageal ganglion, abdominal ganglion and abdominal perisympathetic organs.

Its subcellular location is the secreted. Accelerates ovarian maturation in females. The polypeptide is Neuropeptide F (Locusta migratoria (Migratory locust)).